The primary structure comprises 680 residues: DNA-directed RNA polymerase subunit beta' (680 aa).

Residues C69, C71, C87, and C90 each coordinate Zn(2+). Positions 489, 491, and 493 each coordinate Mg(2+).

Belongs to the RNA polymerase beta' chain family. RpoC1 subfamily. As to quaternary structure, in plastids the minimal PEP RNA polymerase catalytic core is composed of four subunits: alpha, beta, beta', and beta''. When a (nuclear-encoded) sigma factor is associated with the core the holoenzyme is formed, which can initiate transcription. Mg(2+) is required as a cofactor. Zn(2+) serves as cofactor.

It localises to the plastid. Its subcellular location is the chloroplast. It catalyses the reaction RNA(n) + a ribonucleoside 5'-triphosphate = RNA(n+1) + diphosphate. Functionally, DNA-dependent RNA polymerase catalyzes the transcription of DNA into RNA using the four ribonucleoside triphosphates as substrates. This chain is DNA-directed RNA polymerase subunit beta', found in Aethionema cordifolium (Lebanon stonecress).